We begin with the raw amino-acid sequence, 608 residues long: Protein UL27 (608 aa).

A compositionally biased stretch (pro residues) spans 1–13 (MNPVDQPPPPLPT). Positions 1-33 (MNPVDQPPPPLPTQQPEEQAKEDHDDGDERLFR) are disordered. Over residues 18–33 (EQAKEDHDDGDERLFR) the composition is skewed to basic and acidic residues.

The protein belongs to the herpesviridae U4 family. Interacts with host KAT5, PSME3 and EP400.

It is found in the host nucleus. Its subcellular location is the host nucleolus. Functionally, promotes a cell cycle arrest in G0/G1 by inducing the proteasomal degradation of host histone acetyltransferase KAT5/Tip60. The protein is Protein UL27 (UL27) of Human cytomegalovirus (strain AD169) (HHV-5).